Consider the following 636-residue polypeptide: DNA-directed RNA polymerase subunit gamma (636 aa).

Residues Cys71, Cys73, Cys86, and Cys89 each coordinate Zn(2+). Mg(2+)-binding residues include Asp467, Asp469, and Asp471.

The protein belongs to the RNA polymerase beta' chain family. RpoC1 subfamily. In cyanobacteria the RNAP catalytic core is composed of 2 alpha, 1 beta, 1 beta', 1 gamma and 1 omega subunit. When a sigma factor is associated with the core the holoenzyme is formed, which can initiate transcription. Requires Mg(2+) as cofactor. Zn(2+) serves as cofactor.

It catalyses the reaction RNA(n) + a ribonucleoside 5'-triphosphate = RNA(n+1) + diphosphate. DNA-dependent RNA polymerase catalyzes the transcription of DNA into RNA using the four ribonucleoside triphosphates as substrates. In Picosynechococcus sp. (strain ATCC 27264 / PCC 7002 / PR-6) (Agmenellum quadruplicatum), this protein is DNA-directed RNA polymerase subunit gamma.